The primary structure comprises 306 residues: MDIAVIGSNMVDLITYTNQMPKEGETLEAPAFKIGCGGKGANQAVAAAKLNSKVLMLTKVGDDIFADNTIRNLESWGINTTYVEKVPCTSSGVAPIFVNANSSNSILIIKGANKFLSPEDIDRAAEDLKKCQLIVLQLEVQLETVYHAIEFGKKHGIEVLLNPAPALRELDMSYACKCDFFVPNETELEILTGMPVDTYDHIRAAARSLVDKGLNNIIVTMGEKGALWMTRDQEVHVPAFRVNAVDTSGAGDAFIGCFAHYYVQSGDVEAAMKKAVLFAAFSVTGKGTQSSYPSIEQFNEYLSLNE.

Substrate-binding positions include 10–12 (MVD), 38–42 (GKGAN), and glutamate 139. ATP contacts are provided by residues asparagine 184 and 220–225 (TMGEKG). K(+) is bound by residues aspartate 246 and serine 248. 251 to 252 (GD) lines the ATP pocket. Aspartate 252 provides a ligand contact to substrate. Aspartate 252 acts as the Proton acceptor in catalysis. K(+) contacts are provided by serine 282, glycine 285, glycine 287, and serine 291.

It belongs to the carbohydrate kinase PfkB family. Deoxyribokinase subfamily. Homodimer. Requires Mg(2+) as cofactor.

The protein localises to the cytoplasm. It catalyses the reaction 2-deoxy-D-ribose + ATP = 2-deoxy-D-ribose 5-phosphate + ADP + H(+). Functionally, catalyzes the ATP-dependent phosphorylation of 2-deoxy-D-ribose to 2-deoxy-D-ribose 5-phosphate (dRib-5P), allowing the use of deoxyribose as the sole carbon source. Can also use D-ribose, with much lower efficiency. This is Deoxyribokinase from Salmonella typhi.